A 76-amino-acid chain; its full sequence is Defensin-like protein 122 (76 aa).

The signal sequence occupies residues M1–G25. Cystine bridges form between C29-C74, C39-C60, C44-C68, and C48-C70.

This sequence belongs to the DEFL family. As to expression, expressed in flower buds, but not in stems, roots or rosette leaves.

The protein resides in the secreted. The polypeptide is Defensin-like protein 122 (LCR30) (Arabidopsis thaliana (Mouse-ear cress)).